Here is a 129-residue protein sequence, read N- to C-terminus: Prefoldin subunit 6 (129 aa).

Coiled-coil stretches lie at residues 6 to 26 and 84 to 118; these read VRDL…IQKD and IEYI…LQQR.

It belongs to the prefoldin subunit beta family. In terms of assembly, heterohexamer of two PFD-alpha type and four PFD-beta type subunits forming prefoldin co-chaperone complex. Interacts with PFD2, PFD3, PFD4 and PFD5. Interacts with LSM8, a specific subunit of the LSM2-8 complex, which is a core component of the spliceosome. Binds to HSP90 to facilitate the formation of a larger complex made at least of HSP90, PFD6 and LSM8.

Its subcellular location is the cytoplasm. It is found in the nucleus. Functionally, binds specifically to cytosolic chaperonin (c-CPN) and transfers target proteins to it. Binds to nascent polypeptide chain and promotes folding in an environment in which there are many competing pathways for nonnative proteins. Together with other chaperonins, contribute to the regulation of gene expression by modulating the spliceosome function on pre-mRNA splicing post-transcriptionally by acting as a co-chaperone of Hsp90 to control levels of LSM8. Required for the biogenesis of tubulins and for subsequent microtubules (MTs) organization and dynamicity, but unable to associate with microtubules. Involved in the process leading to microtubules dissociation in response to gibberellic acid (GA) probably due to the DELLA proteins-mediated translocation of the prefoldin co-chaperone complex from the cytoplasm to the nucleus. Contributes to the GA-dependent regulation of PIN2 trafficking at the plasma membrane, thus influencing auxin flux. This Arabidopsis thaliana (Mouse-ear cress) protein is Prefoldin subunit 6.